The sequence spans 239 residues: Transcriptional regulatory protein BtsR (239 aa).

The Response regulatory domain maps to 3–116 (KVLIVDDEPL…RLEKTLHRLR (114 aa)). At D54 the chain carries 4-aspartylphosphate. Positions 137–239 (IPCTGHSRIY…LKSLKEAIGL (103 aa)) constitute an HTH LytTR-type domain.

Phosphorylated by BtsS.

In terms of biological role, member of the two-component regulatory system BtsS/BtsR. BtsR regulates expression of btsT by binding to its promoter region. This is Transcriptional regulatory protein BtsR from Salmonella typhi.